We begin with the raw amino-acid sequence, 651 residues long: Acetyl-coenzyme A synthetase (651 aa).

CoA contacts are provided by residues 190 to 193 (RGGK), Thr-312, and Asn-336. ATP is bound by residues 388–390 (GEP), 412–417 (DTWWQT), Asp-501, and Arg-516. Ser-524 is a binding site for CoA. Arg-527 serves as a coordination point for ATP. Residues Val-538, His-540, and Val-543 each contribute to the Mg(2+) site. Position 585 (Arg-585) interacts with CoA. Lys-610 carries the N6-acetyllysine modification.

Belongs to the ATP-dependent AMP-binding enzyme family. Requires Mg(2+) as cofactor. Acetylated. Deacetylation by the SIR2-homolog deacetylase activates the enzyme.

It carries out the reaction acetate + ATP + CoA = acetyl-CoA + AMP + diphosphate. Functionally, catalyzes the conversion of acetate into acetyl-CoA (AcCoA), an essential intermediate at the junction of anabolic and catabolic pathways. AcsA undergoes a two-step reaction. In the first half reaction, AcsA combines acetate with ATP to form acetyl-adenylate (AcAMP) intermediate. In the second half reaction, it can then transfer the acetyl group from AcAMP to the sulfhydryl group of CoA, forming the product AcCoA. The chain is Acetyl-coenzyme A synthetase from Mesorhizobium japonicum (strain LMG 29417 / CECT 9101 / MAFF 303099) (Mesorhizobium loti (strain MAFF 303099)).